The primary structure comprises 267 residues: AMP/ADP-polyphosphate phosphotransferase (267 aa).

This sequence belongs to the polyphosphate kinase 2 (PPK2) family. Class III subfamily. The cofactor is Mn(2+).

The catalysed reaction is [phosphate](n) + ADP = [phosphate](n+1) + AMP. It carries out the reaction [phosphate](n) + ATP = [phosphate](n+1) + ADP. Its function is as follows. Uses inorganic polyphosphate (polyP) as a donor to convert both AMP to ADP and ADP to ATP. Can also use GMP, CMP, UMP, GDP, CDP and UDP. This chain is AMP/ADP-polyphosphate phosphotransferase, found in Meiothermus ruber (strain ATCC 35948 / DSM 1279 / VKM B-1258 / 21) (Thermus ruber).